The primary structure comprises 430 residues: Adenylosuccinate synthetase (430 aa).

Residues 12–18 (GDEGKGK) and 40–42 (GHT) each bind GTP. The active-site Proton acceptor is aspartate 13. Aspartate 13 and glycine 40 together coordinate Mg(2+). IMP-binding positions include 13–16 (DEGK), 38–41 (NAGH), threonine 128, arginine 142, glutamine 223, threonine 238, and arginine 302. Histidine 41 acts as the Proton donor in catalysis. Residue 298–304 (TTTGRPR) coordinates substrate. Residues arginine 304, 330–332 (SID), and 413–415 (SVG) each bind GTP.

The protein belongs to the adenylosuccinate synthetase family. As to quaternary structure, homodimer. It depends on Mg(2+) as a cofactor.

The protein resides in the cytoplasm. The enzyme catalyses IMP + L-aspartate + GTP = N(6)-(1,2-dicarboxyethyl)-AMP + GDP + phosphate + 2 H(+). It participates in purine metabolism; AMP biosynthesis via de novo pathway; AMP from IMP: step 1/2. In terms of biological role, plays an important role in the de novo pathway of purine nucleotide biosynthesis. Catalyzes the first committed step in the biosynthesis of AMP from IMP. The sequence is that of Adenylosuccinate synthetase from Lactococcus lactis subsp. lactis (strain IL1403) (Streptococcus lactis).